The following is a 408-amino-acid chain: Peptidase T (408 aa).

His78 serves as a coordination point for Zn(2+). Residue Asp80 is part of the active site. Residue Asp141 coordinates Zn(2+). The active-site Proton acceptor is Glu175. Glu176, Asp198, and His380 together coordinate Zn(2+).

This sequence belongs to the peptidase M20B family. Zn(2+) is required as a cofactor.

The protein localises to the cytoplasm. The enzyme catalyses Release of the N-terminal residue from a tripeptide.. In terms of biological role, cleaves the N-terminal amino acid of tripeptides. The protein is Peptidase T of Clostridium botulinum (strain Loch Maree / Type A3).